The sequence spans 332 residues: ADP-L-glycero-D-manno-heptose-6-epimerase (332 aa).

Residues 10-11 (FI), 31-32 (DD), lysine 38, 74-78 (QGACS), and asparagine 91 each bind NADP(+). The active-site Proton acceptor is tyrosine 138. Lysine 142 provides a ligand contact to NADP(+). Residue asparagine 167 coordinates substrate. Residues valine 168 and lysine 176 each coordinate NADP(+). The active-site Proton acceptor is lysine 176. Residues arginine 178, histidine 185, 199–202 (FSGW), arginine 212, and tyrosine 291 contribute to the substrate site.

It belongs to the NAD(P)-dependent epimerase/dehydratase family. HldD subfamily. Homopentamer. NADP(+) serves as cofactor.

The catalysed reaction is ADP-D-glycero-beta-D-manno-heptose = ADP-L-glycero-beta-D-manno-heptose. Its pathway is nucleotide-sugar biosynthesis; ADP-L-glycero-beta-D-manno-heptose biosynthesis; ADP-L-glycero-beta-D-manno-heptose from D-glycero-beta-D-manno-heptose 7-phosphate: step 4/4. Catalyzes the interconversion between ADP-D-glycero-beta-D-manno-heptose and ADP-L-glycero-beta-D-manno-heptose via an epimerization at carbon 6 of the heptose. The chain is ADP-L-glycero-D-manno-heptose-6-epimerase from Bordetella avium (strain 197N).